The following is a 1051-amino-acid chain: Lateral signaling target protein 2 homolog (1051 aa).

Disordered regions lie at residues 305 to 440 (PLGS…DEDL), 516 to 552 (GSNAATERQQQQQHMDELQPGDQQQQQQQLQDEPSTS), 566 to 703 (HLPS…NASS), and 837 to 968 (IDLA…DGKA). The segment covering 319 to 358 (NNTSSSTSNNNNNNNNNSSSSSSSSSGSGSNTAKTSTSST) has biased composition (low complexity). Positions 360-370 (KAVERLVDHRN) are enriched in basic and acidic residues. Positions 371–391 (NNSSTVAGATQPSTARSPSML) are enriched in polar residues. 2 stretches are compositionally biased toward low complexity: residues 392 to 401 (SLSAGSTPTA) and 409 to 428 (PSHSIASTSSAATTSTNPPA). Polar residues predominate over residues 518 to 528 (NAATERQQQQQ). Composition is skewed to low complexity over residues 533-549 (LQPGDQQQQQQQLQDEP) and 568-582 (PSSSSENEQAPSSNQ). S569 and S570 each carry phosphoserine. Polar residues predominate over residues 583-596 (QTTIKTPNGNQSMP). Residues 597 to 606 (NSSSSSSNHN) are compositionally biased toward low complexity. Composition is skewed to basic residues over residues 607-637 (NNRHRHSHSHSHSSHHHHHHHRHHHHTHPHH) and 650-672 (HHHHHHHHHQSHPHRINRSARKR). The segment covering 692–703 (TPGSADTSNASS) has biased composition (polar residues). Positions 840 to 852 (ASGNNNGNSNAAA) are enriched in low complexity. Phosphoserine is present on S861. 2 stretches are compositionally biased toward low complexity: residues 879-924 (QQQQ…SPIS) and 937-960 (SSIGTTSTITPSTAAATATTMSPP). An FYVE-type zinc finger spans residues 965–1025 (DGKAPRCMSC…VCRECYVREV (61 aa)). Positions 971, 974, 987, 990, 995, 998, 1017, and 1020 each coordinate Zn(2+). The tract at residues 1028 to 1051 (SRQAPAQPSQAHGQASRPQAASAS) is disordered.

This sequence belongs to the lst-2 family.

Functionally, negative regulator of epidermal growth factor receptor (EGFR) signaling. This is Lateral signaling target protein 2 homolog from Drosophila mojavensis (Fruit fly).